Consider the following 253-residue polypeptide: Uracil-DNA glycosylase (253 aa).

Aspartate 79 functions as the Proton acceptor in the catalytic mechanism.

This sequence belongs to the uracil-DNA glycosylase (UDG) superfamily. UNG family.

The protein localises to the cytoplasm. The catalysed reaction is Hydrolyzes single-stranded DNA or mismatched double-stranded DNA and polynucleotides, releasing free uracil.. Excises uracil residues from the DNA which can arise as a result of misincorporation of dUMP residues by DNA polymerase or due to deamination of cytosine. In Xylella fastidiosa (strain 9a5c), this protein is Uracil-DNA glycosylase.